A 439-amino-acid polypeptide reads, in one-letter code: Argininosuccinate lyase (439 aa).

Belongs to the lyase 1 family. Argininosuccinate lyase subfamily.

The protein resides in the cytoplasm. It carries out the reaction 2-(N(omega)-L-arginino)succinate = fumarate + L-arginine. It functions in the pathway amino-acid biosynthesis; L-arginine biosynthesis; L-arginine from L-ornithine and carbamoyl phosphate: step 3/3. The protein is Argininosuccinate lyase of Caldanaerobacter subterraneus subsp. tengcongensis (strain DSM 15242 / JCM 11007 / NBRC 100824 / MB4) (Thermoanaerobacter tengcongensis).